Here is a 618-residue protein sequence, read N- to C-terminus: Glutamine--fructose-6-phosphate aminotransferase [isomerizing] (618 aa).

Catalysis depends on Cys2, which acts as the Nucleophile; for GATase activity. The Glutamine amidotransferase type-2 domain occupies 2 to 226 (CGIVGYAGRN…DFETAVLTPD (225 aa)). Positions 72–91 (WATHGRPSTENAHPHNSGGN) are disordered. 2 consecutive SIS domains span residues 295–434 (NDDE…VRGK) and 467–608 (CAEN…IDKP). The active-site For Fru-6P isomerization activity is the Lys613.

As to quaternary structure, homodimer.

It localises to the cytoplasm. It catalyses the reaction D-fructose 6-phosphate + L-glutamine = D-glucosamine 6-phosphate + L-glutamate. In terms of biological role, catalyzes the first step in hexosamine metabolism, converting fructose-6P into glucosamine-6P using glutamine as a nitrogen source. This chain is Glutamine--fructose-6-phosphate aminotransferase [isomerizing], found in Methanosarcina mazei (strain ATCC BAA-159 / DSM 3647 / Goe1 / Go1 / JCM 11833 / OCM 88) (Methanosarcina frisia).